We begin with the raw amino-acid sequence, 337 residues long: ATP-dependent (S)-NAD(P)H-hydrate dehydratase (337 aa).

Residue serine 6 is modified to Phosphoserine. The YjeF C-terminal domain occupies 11–335 (IKLAQKRCIP…DRVGEVFAKL (325 aa)). (6S)-NADPHX contacts are provided by residues glycine 121 and 182–188 (NVVEFKR). Residues 218 to 222 (KGQSD) and 240 to 249 (GSNKRVGGQG) each bind ATP. Residues 224–246 (IFSPDSEKDMLTNSEEGSNKRVG) are disordered. Position 250 (aspartate 250) interacts with (6S)-NADPHX.

It belongs to the NnrD/CARKD family. The cofactor is Mg(2+).

Its subcellular location is the cytoplasm. The catalysed reaction is (6S)-NADHX + ATP = ADP + phosphate + NADH + H(+). It carries out the reaction (6S)-NADPHX + ATP = ADP + phosphate + NADPH + H(+). Catalyzes the dehydration of the S-form of NAD(P)HX at the expense of ATP, which is converted to ADP. Together with NAD(P)HX epimerase, which catalyzes the epimerization of the S- and R-forms, the enzyme allows the repair of both epimers of NAD(P)HX, a damaged form of NAD(P)H that is a result of enzymatic or heat-dependent hydration. This chain is ATP-dependent (S)-NAD(P)H-hydrate dehydratase, found in Saccharomyces cerevisiae (strain ATCC 204508 / S288c) (Baker's yeast).